We begin with the raw amino-acid sequence, 691 residues long: Cyclic nucleotide-gated channel alpha-1 (691 aa).

Over 1 to 168 (MKKNIINTWY…PAGNMYYNWL (168 aa)) the chain is Cytoplasmic. Residues 31–151 (ENGARSSFSD…KGKDKKEEEK (121 aa)) form a disordered region. Over residues 39–56 (SDDDGDDDSASMFEESEN) the composition is skewed to acidic residues. 2 stretches are compositionally biased toward basic and acidic residues: residues 57-76 (ETPH…DPSQ) and 112-151 (SKSG…EEEK). The helical transmembrane segment at 169–190 (FCITLPVMYNWTMVIARACFDE) threads the bilayer. Over 191-200 (LQSDYLEYWI) the chain is Extracellular. A helical transmembrane segment spans residues 201 to 221 (IFDYLSDIVYLLDMFVRTRTG). Over 222 to 246 (YLEQGLLVREEAKLIEKYKSNLQFK) the chain is Cytoplasmic. The helical transmembrane segment at 247 to 265 (LDFLSVIPTDLLYFKLGWN) threads the bilayer. The Extracellular portion of the chain corresponds to 266–270 (YPEIR). A helical membrane pass occupies residues 271 to 289 (LNRLLRISRMFEFFQRTET). At 290–296 (RTNYPNI) the chain is on the cytoplasmic side. The ion conduction pathway stretch occupies residues 294-402 (PNIFRISNLV…GNIGSMISNM (109 aa)). The helical transmembrane segment at 297–320 (FRISNLVMYIVIIIHWNACVYFSI) threads the bilayer. At 321 to 343 (SKAIGFGNDTWVYPDVNDPEFGR) the chain is on the extracellular side. Residue N328 is glycosylated (N-linked (GlcNAc...) asparagine). 2 helical membrane-spanning segments follow: residues 344–378 (LARK…VFVV) and 379–403 (VDFL…SNMN). Residues 361–364 (TIGE) are selectivity filter. A C-linker region spans residues 404-480 (AARAEFQARI…DTLKKVRIFA (77 aa)). The Cytoplasmic portion of the chain corresponds to 404-691 (AARAEFQARI…ESRPLDSTQD (288 aa)). The segment at 484–604 (AGLLVELVLK…EEKGKQILMK (121 aa)) is cyclic nucleotide-binding domain. 4 residues coordinate 3',5'-cyclic GMP: G544, S547, R560, and T561. The 3',5'-cyclic AMP site is built by R560 and T561. Residues 622-676 (LEEKVTRMEGSVDLLQTRFARILAEYESMQQKLKQRLTKVERFLKPIIDTEFSAL) adopt a coiled-coil conformation.

The protein belongs to the cyclic nucleotide-gated cation channel (TC 1.A.1.5) family. CNGA1 subfamily. As to quaternary structure, forms heterotetrameric channels composed of CNGA1 and CNGB1 subunits with 3:1 stoichiometry. May also form cyclic nucleotide-activated homotetrameric channels, that are efficiently activated by saturating cGMP, but poorly activated by saturating cAMP compared to the heterotetramer with CNGB1. The channel binds Ca(2+)-bound CALM1 via CaM1 and CaM2 regions of the CNGB1 subunit; this interaction modulates the affinity of the channel for cNMPs in response to intracellular Ca(2+) levels.

The protein localises to the cell membrane. It catalyses the reaction Ca(2+)(in) = Ca(2+)(out). The enzyme catalyses Na(+)(in) = Na(+)(out). The catalysed reaction is K(+)(in) = K(+)(out). It carries out the reaction NH4(+)(in) = NH4(+)(out). It catalyses the reaction Rb(+)(in) = Rb(+)(out). The enzyme catalyses Li(+)(in) = Li(+)(out). The catalysed reaction is Cs(+)(in) = Cs(+)(out). Its function is as follows. Pore-forming subunit of the rod cyclic nucleotide-gated channel. Mediates rod photoresponses at dim light converting transient changes in intracellular cGMP levels into electrical signals. In the dark, cGMP levels are high and keep the channel open enabling a steady inward current carried by Na(+) and Ca(2+) ions that leads to membrane depolarization and neurotransmitter release from synaptic terminals. Upon photon absorption cGMP levels decline leading to channel closure and membrane hyperpolarization that ultimately slows neurotransmitter release and signals the presence of light, the end point of the phototransduction cascade. Conducts cGMP- and cAMP-gated ion currents, with permeability for monovalent and divalent cations. The selectivity for Ca(2+) over Na(+) increases with cGMP concentrations, whereas the selectivity among monovalent ions is independent of the cGMP levels. The sequence is that of Cyclic nucleotide-gated channel alpha-1 from Canis lupus familiaris (Dog).